The chain runs to 201 residues: Potassium-transporting ATPase KdpC subunit (201 aa).

The helical transmembrane segment at 10–30 (VLLVALTAVTGLAYPLAVTGI) threads the bilayer.

It belongs to the KdpC family. The system is composed of three essential subunits: KdpA, KdpB and KdpC.

It localises to the cell inner membrane. Part of the high-affinity ATP-driven potassium transport (or Kdp) system, which catalyzes the hydrolysis of ATP coupled with the electrogenic transport of potassium into the cytoplasm. This subunit acts as a catalytic chaperone that increases the ATP-binding affinity of the ATP-hydrolyzing subunit KdpB by the formation of a transient KdpB/KdpC/ATP ternary complex. The sequence is that of Potassium-transporting ATPase KdpC subunit from Methylorubrum extorquens (strain PA1) (Methylobacterium extorquens).